The sequence spans 291 residues: Pyridoxal 5'-phosphate synthase subunit PdxS (291 aa).

Asp-23 lines the D-ribose 5-phosphate pocket. Lys-80 (schiff-base intermediate with D-ribose 5-phosphate) is an active-site residue. Gly-152 serves as a coordination point for D-ribose 5-phosphate. Arg-164 contributes to the D-glyceraldehyde 3-phosphate binding site. D-ribose 5-phosphate contacts are provided by residues Gly-213 and 234–235 (GS).

The protein belongs to the PdxS/SNZ family. In the presence of PdxT, forms a dodecamer of heterodimers.

The enzyme catalyses aldehydo-D-ribose 5-phosphate + D-glyceraldehyde 3-phosphate + L-glutamine = pyridoxal 5'-phosphate + L-glutamate + phosphate + 3 H2O + H(+). Its pathway is cofactor biosynthesis; pyridoxal 5'-phosphate biosynthesis. Its function is as follows. Catalyzes the formation of pyridoxal 5'-phosphate from ribose 5-phosphate (RBP), glyceraldehyde 3-phosphate (G3P) and ammonia. The ammonia is provided by the PdxT subunit. Can also use ribulose 5-phosphate and dihydroxyacetone phosphate as substrates, resulting from enzyme-catalyzed isomerization of RBP and G3P, respectively. The polypeptide is Pyridoxal 5'-phosphate synthase subunit PdxS (Bifidobacterium longum (strain NCC 2705)).